The primary structure comprises 682 residues: Methionine--tRNA ligase (682 aa).

The short motif at 14–24 (PYANGSIHLGH) is the 'HIGH' region element. 4 residues coordinate Zn(2+): C145, C148, C158, and C161. The 'KMSKS' region motif lies at 331–335 (KMSKS). K334 is a binding site for ATP. Positions 580-682 (AFAAVDLRVA…SGAKPGQRIK (103 aa)) constitute a tRNA-binding domain.

This sequence belongs to the class-I aminoacyl-tRNA synthetase family. MetG type 1 subfamily. As to quaternary structure, homodimer. Zn(2+) serves as cofactor.

The protein resides in the cytoplasm. The catalysed reaction is tRNA(Met) + L-methionine + ATP = L-methionyl-tRNA(Met) + AMP + diphosphate. Is required not only for elongation of protein synthesis but also for the initiation of all mRNA translation through initiator tRNA(fMet) aminoacylation. The polypeptide is Methionine--tRNA ligase (Pseudomonas savastanoi pv. phaseolicola (strain 1448A / Race 6) (Pseudomonas syringae pv. phaseolicola (strain 1448A / Race 6))).